Reading from the N-terminus, the 474-residue chain is GTPase Der (474 aa).

2 EngA-type G domains span residues 2–166 and 212–385; these read LRIA…NVPE and LKIA…ETVS. Residues 8–15, 55–59, 118–121, 218–225, 265–269, and 330–333 each bind GTP; these read GRPNVGKS, DTGGV, NKAD, DTAGL, and NKWD. Residues 386 to 470 form the KH-like domain; it reads SKVPTPVVNK…PFDLEFKEKT (85 aa).

The protein belongs to the TRAFAC class TrmE-Era-EngA-EngB-Septin-like GTPase superfamily. EngA (Der) GTPase family. As to quaternary structure, associates with the 50S ribosomal subunit.

In terms of biological role, GTPase that plays an essential role in the late steps of ribosome biogenesis. In Chlamydia caviae (strain ATCC VR-813 / DSM 19441 / 03DC25 / GPIC) (Chlamydophila caviae), this protein is GTPase Der.